Reading from the N-terminus, the 473-residue chain is Ribulose bisphosphate carboxylase large chain (473 aa).

Substrate contacts are provided by Asn116 and Thr166. Residue Lys168 is the Proton acceptor of the active site. Residue Lys170 participates in substrate binding. 3 residues coordinate Mg(2+): Lys194, Asp196, and Glu197. The residue at position 194 (Lys194) is an N6-carboxylysine. The Proton acceptor role is filled by His287. Residues Arg288, His320, and Ser372 each coordinate substrate.

Belongs to the RuBisCO large chain family. Type I subfamily. Heterohexadecamer of 8 large chains and 8 small chains. In R.sphaeroides the complex is approximately 500 kDa. Requires Mg(2+) as cofactor.

It carries out the reaction 2 (2R)-3-phosphoglycerate + 2 H(+) = D-ribulose 1,5-bisphosphate + CO2 + H2O. The enzyme catalyses D-ribulose 1,5-bisphosphate + O2 = 2-phosphoglycolate + (2R)-3-phosphoglycerate + 2 H(+). Functionally, ruBisCO catalyzes two reactions: the carboxylation of D-ribulose 1,5-bisphosphate, the primary event in carbon dioxide fixation, as well as the oxidative fragmentation of the pentose substrate. Both reactions occur simultaneously and in competition at the same active site. The chain is Ribulose bisphosphate carboxylase large chain from Thiobacillus denitrificans (strain ATCC 25259 / T1).